The following is an 81-amino-acid chain: Translational regulator CsrA (81 aa).

It belongs to the CsrA/RsmA family. As to quaternary structure, homodimer; the beta-strands of each monomer intercalate to form a hydrophobic core, while the alpha-helices form wings that extend away from the core.

It is found in the cytoplasm. Functionally, a translational regulator that binds mRNA to regulate translation initiation and/or mRNA stability. Usually binds in the 5'-UTR at or near the Shine-Dalgarno sequence preventing ribosome-binding, thus repressing translation. Its main target seems to be the major flagellin gene, while its function is anatagonized by FliW. The protein is Translational regulator CsrA of Borreliella burgdorferi (strain ATCC 35210 / DSM 4680 / CIP 102532 / B31) (Borrelia burgdorferi).